The chain runs to 99 residues: Ubiquitin-related modifier 1 homolog 2 (99 aa).

The residue at position 99 (Gly-99) is a 1-thioglycine. A Glycyl lysine isopeptide (Gly-Lys) (interchain with K-? in acceptor proteins) cross-link involves residue Gly-99.

The protein belongs to the URM1 family. Post-translationally, C-terminal thiocarboxylation occurs in 2 steps, it is first acyl-adenylated (-COAMP) via the hesA/moeB/thiF part of the MOCS3 homolog, then thiocarboxylated (-COSH) via the rhodanese domain of the MOCS3 homolog.

It localises to the cytoplasm. It functions in the pathway tRNA modification; 5-methoxycarbonylmethyl-2-thiouridine-tRNA biosynthesis. Its function is as follows. Acts as a sulfur carrier required for 2-thiolation of mcm(5)S(2)U at tRNA wobble positions of cytosolic tRNA(Lys), tRNA(Glu) and tRNA(Gln). Serves as sulfur donor in tRNA 2-thiolation reaction by being thiocarboxylated (-COSH) at its C-terminus by MOCS3. The sulfur is then transferred to tRNA to form 2-thiolation of mcm(5)S(2)U. Also acts as a ubiquitin-like protein (UBL) that is covalently conjugated via an isopeptide bond to lysine residues of target proteins. The thiocarboxylated form serves as substrate for conjugation and oxidative stress specifically induces the formation of UBL-protein conjugates. The chain is Ubiquitin-related modifier 1 homolog 2 from Arabidopsis thaliana (Mouse-ear cress).